The sequence spans 302 residues: Rab effector Noc2 (302 aa).

The RabBD domain occupies 41 to 158; the sequence is QRRTQCLSPG…KRSGAWFYKG (118 aa). The FYVE-type zinc-finger motif lies at 89–146; it reads GNGVSQCLLCGEMLGFLGSSSVFCKDCRKKVCTKCGIEASPGQKRPLWLCKICSEQRE. Cysteine 95, cysteine 98, cysteine 112, cysteine 115, cysteine 120, cysteine 123, cysteine 138, and cysteine 141 together coordinate Zn(2+). 2 disordered regions span residues 174–194 and 206–302; these read DPHF…SAEV and VSSD…TTHY. Phosphoserine is present on serine 248. Positions 258–269 are enriched in low complexity; sequence SHLSGSQSSLGS.

In terms of assembly, recruited to dense-core vesicles through specific interaction with RAB27A in endocrine cells. Interacts with RAB3A, RAB3B, RAB3C and RAB3D. Interacts with ZYX. As to expression, highly expressed in pancreatic islets and parotid. High to moderate expression in adrenal gland, pituitary gland and ovary.

It localises to the cytoplasm. The protein localises to the cytoplasmic vesicle. It is found in the secretory vesicle membrane. Rab GTPase effector involved in the late steps of regulated exocytosis, both in endocrine and exocrine cells. Regulates the exocytosis of dense-core vesicles in neuroendocrine cells through interaction with RAB27A. Acts as a potential RAB3B effector protein in epithelial cells. The sequence is that of Rab effector Noc2 (Rph3al) from Rattus norvegicus (Rat).